Consider the following 188-residue polypeptide: dCTP deaminase (188 aa).

109 to 114 is a binding site for dCTP; that stretch reads KSTYAR. Glu135 functions as the Proton donor/acceptor in the catalytic mechanism. Residues Gln154, Tyr168, and Gln178 each coordinate dCTP.

The protein belongs to the dCTP deaminase family. As to quaternary structure, homotrimer.

The enzyme catalyses dCTP + H2O + H(+) = dUTP + NH4(+). It functions in the pathway pyrimidine metabolism; dUMP biosynthesis; dUMP from dCTP (dUTP route): step 1/2. In terms of biological role, catalyzes the deamination of dCTP to dUTP. In Helicobacter hepaticus (strain ATCC 51449 / 3B1), this protein is dCTP deaminase.